The chain runs to 680 residues: tRNA 5-methylaminomethyl-2-thiouridine biosynthesis bifunctional protein MnmC (680 aa).

The tract at residues 1 to 267 (MTAEPNKPCQ…MAAILSSDAP (267 aa)) is tRNA (mnm(5)s(2)U34)-methyltransferase. The segment at 273–680 (IGGGLASAHL…LRKLLKGKSL (408 aa)) is FAD-dependent cmnm(5)s(2)U34 oxidoreductase.

In the N-terminal section; belongs to the methyltransferase superfamily. tRNA (mnm(5)s(2)U34)-methyltransferase family. It in the C-terminal section; belongs to the DAO family. FAD serves as cofactor.

The protein resides in the cytoplasm. The catalysed reaction is 5-aminomethyl-2-thiouridine(34) in tRNA + S-adenosyl-L-methionine = 5-methylaminomethyl-2-thiouridine(34) in tRNA + S-adenosyl-L-homocysteine + H(+). In terms of biological role, catalyzes the last two steps in the biosynthesis of 5-methylaminomethyl-2-thiouridine (mnm(5)s(2)U) at the wobble position (U34) in tRNA. Catalyzes the FAD-dependent demodification of cmnm(5)s(2)U34 to nm(5)s(2)U34, followed by the transfer of a methyl group from S-adenosyl-L-methionine to nm(5)s(2)U34, to form mnm(5)s(2)U34. The chain is tRNA 5-methylaminomethyl-2-thiouridine biosynthesis bifunctional protein MnmC from Shewanella sp. (strain W3-18-1).